The following is a 502-amino-acid chain: Serine/threonine-protein kinase SKS1 (502 aa).

Residues Phe-10–Thr-338 enclose the Protein kinase domain. ATP-binding positions include Ile-16–Val-24 and Lys-39. The Proton acceptor role is filled by Asp-186. Low complexity-rich tracts occupy residues Gln-376–Glu-391 and Glu-399–Gln-410. A disordered region spans residues Gln-376–Asn-439. Over residues Gln-411–Ser-420 the composition is skewed to acidic residues.

It belongs to the protein kinase superfamily. Ser/Thr protein kinase family.

It carries out the reaction L-seryl-[protein] + ATP = O-phospho-L-seryl-[protein] + ADP + H(+). The enzyme catalyses L-threonyl-[protein] + ATP = O-phospho-L-threonyl-[protein] + ADP + H(+). Its function is as follows. May have a role in glucose regulation. The sequence is that of Serine/threonine-protein kinase SKS1 (SKS1) from Saccharomyces cerevisiae (strain ATCC 204508 / S288c) (Baker's yeast).